A 98-amino-acid chain; its full sequence is NADH-ubiquinone oxidoreductase chain 4L (98 aa).

The next 3 helical transmembrane spans lie at 1–21, 29–49, and 61–81; these read MSLV…GLLM, SLLC…LTIL, and IILL…LVMV.

The protein belongs to the complex I subunit 4L family. In terms of assembly, core subunit of respiratory chain NADH dehydrogenase (Complex I) which is composed of 45 different subunits.

The protein localises to the mitochondrion inner membrane. It catalyses the reaction a ubiquinone + NADH + 5 H(+)(in) = a ubiquinol + NAD(+) + 4 H(+)(out). Core subunit of the mitochondrial membrane respiratory chain NADH dehydrogenase (Complex I) which catalyzes electron transfer from NADH through the respiratory chain, using ubiquinone as an electron acceptor. Part of the enzyme membrane arm which is embedded in the lipid bilayer and involved in proton translocation. This Muntiacus feae (Fea's muntjac) protein is NADH-ubiquinone oxidoreductase chain 4L (MT-ND4L).